The chain runs to 313 residues: Putative phosphoribosylaminoimidazole-succinocarboxamide synthase 2 (313 aa).

This sequence belongs to the SAICAR synthetase family.

It catalyses the reaction 5-amino-1-(5-phospho-D-ribosyl)imidazole-4-carboxylate + L-aspartate + ATP = (2S)-2-[5-amino-1-(5-phospho-beta-D-ribosyl)imidazole-4-carboxamido]succinate + ADP + phosphate + 2 H(+). It functions in the pathway purine metabolism; IMP biosynthesis via de novo pathway; 5-amino-1-(5-phospho-D-ribosyl)imidazole-4-carboxamide from 5-amino-1-(5-phospho-D-ribosyl)imidazole-4-carboxylate: step 1/2. In Mesorhizobium japonicum (strain LMG 29417 / CECT 9101 / MAFF 303099) (Mesorhizobium loti (strain MAFF 303099)), this protein is Putative phosphoribosylaminoimidazole-succinocarboxamide synthase 2 (purC2).